The sequence spans 273 residues: ATP synthase subunit a (273 aa).

The next 7 membrane-spanning stretches (helical) occupy residues 41–61, 101–121, 122–142, 143–163, 183–203, 221–241, and 247–267; these read ILNI…LLIF, LIAP…LMDL, LAVD…ALRV, VPSA…ILII, PFNH…SLLS, LVFI…ISVP, and IIVI…YIAM.

It belongs to the ATPase A chain family. In terms of assembly, F-type ATPases have 2 components, CF(1) - the catalytic core - and CF(0) - the membrane proton channel. CF(1) has five subunits: alpha(3), beta(3), gamma(1), delta(1), epsilon(1). CF(0) has three main subunits: a(1), b(2) and c(9-12). The alpha and beta chains form an alternating ring which encloses part of the gamma chain. CF(1) is attached to CF(0) by a central stalk formed by the gamma and epsilon chains, while a peripheral stalk is formed by the delta and b chains.

The protein localises to the cell membrane. Functionally, key component of the proton channel; it plays a direct role in the translocation of protons across the membrane. The protein is ATP synthase subunit a of Baumannia cicadellinicola subsp. Homalodisca coagulata.